Reading from the N-terminus, the 688-residue chain is Two-component response regulator ORR23 (688 aa).

The region spanning 25-140 (RVLAVDDDPV…ELRNIWQHVI (116 aa)) is the Response regulatory domain. A 4-aspartylphosphate modification is found at D76. A disordered region spans residues 161 to 212 (PPNADSDHVHGHVTCGSPDQSGRPSKKRKEYCSEEEDEGEVNTQDIDDPSAP). The span at 193–208 (SEEEDEGEVNTQDIDD) shows a compositional bias: acidic residues. The segment at residues 211–270 (APKKPRVVWSVELHRKFVAAVNQLGIDKAVPKRILELMNVEKLTRENVASHLQKYRLYLK) is a DNA-binding region (myb-like GARP).

The protein belongs to the ARR family. Type-B subfamily. Post-translationally, two-component system major event consists of a His-to-Asp phosphorelay between a sensor histidine kinase (HK) and a response regulator (RR). In plants, the His-to-Asp phosphorelay involves an additional intermediate named Histidine-containing phosphotransfer protein (HPt). This multistep phosphorelay consists of a His-Asp-His-Asp sequential transfer of a phosphate group between first a His and an Asp of the HK protein, followed by the transfer to a conserved His of the HPt protein and finally the transfer to an Asp in the receiver domain of the RR protein.

The protein localises to the nucleus. In terms of biological role, transcriptional activator that binds specific DNA sequence. Functions as a response regulator involved in His-to-Asp phosphorelay signal transduction system. Phosphorylation of the Asp residue in the receiver domain activates the ability of the protein to promote the transcription of target genes. May directly activate some type-A response regulators in response to cytokinins. This Oryza sativa subsp. indica (Rice) protein is Two-component response regulator ORR23.